The following is a 259-amino-acid chain: MELKIARAIIKHGLEDLYEYSEVDVAVVGAGPAGLTAARYLAERGHRVVVYERRFSFGGGIGPGGNMIPKIVVQEEAVPVLKDFRVRYRPVGDGLYTVDPAELIAKLAAGAIDAGAKIILGVHVDDVIFRGDPPRVAGLLWVWTPIQMSGSHVDPLYTQARAVLDATGHDAEVISIASRKVPELGVEVRGEKSAWAEVSEKLVVEHTGRVAPGLYAAGMAVCAVHGLPRMGPIFGGMLLSGRRAAEIIHKDLVEYAVRA.

NAD(+) is bound by residues Ala-33, 52–53, Gly-60, Val-124, and 152–154; these read ER and HVD. Residues Asp-154 and His-169 each coordinate Fe cation. Met-219 serves as a coordination point for NAD(+). Arg-229 provides a ligand contact to glycine.

Belongs to the THI4 family. Homooctamer; tetramer of dimers. Requires Fe(2+) as cofactor.

The catalysed reaction is hydrogen sulfide + glycine + NAD(+) = ADP-5-ethyl-4-methylthiazole-2-carboxylate + nicotinamide + 3 H2O + H(+). It participates in cofactor biosynthesis; thiamine diphosphate biosynthesis. Involved in the biosynthesis of the thiazole moiety of thiamine. Catalyzes the conversion of NAD and glycine to adenosine diphosphate 5-(2-hydroxyethyl)-4-methylthiazole-2-carboxylate (ADT), an adenylated thiazole intermediate, using free sulfide as a source of sulfur. The protein is Thiamine thiazole synthase of Pyrobaculum neutrophilum (strain DSM 2338 / JCM 9278 / NBRC 100436 / V24Sta) (Thermoproteus neutrophilus).